The following is a 158-amino-acid chain: NADH-quinone oxidoreductase subunit B (158 aa).

Positions 37, 38, 102, and 132 each coordinate [4Fe-4S] cluster.

Belongs to the complex I 20 kDa subunit family. In terms of assembly, NDH-1 is composed of 14 different subunits. Subunits NuoB, C, D, E, F, and G constitute the peripheral sector of the complex. It depends on [4Fe-4S] cluster as a cofactor.

It localises to the cell inner membrane. It catalyses the reaction a quinone + NADH + 5 H(+)(in) = a quinol + NAD(+) + 4 H(+)(out). In terms of biological role, NDH-1 shuttles electrons from NADH, via FMN and iron-sulfur (Fe-S) centers, to quinones in the respiratory chain. Couples the redox reaction to proton translocation (for every two electrons transferred, four hydrogen ions are translocated across the cytoplasmic membrane), and thus conserves the redox energy in a proton gradient. In Aromatoleum aromaticum (strain DSM 19018 / LMG 30748 / EbN1) (Azoarcus sp. (strain EbN1)), this protein is NADH-quinone oxidoreductase subunit B.